The following is a 363-amino-acid chain: Methyltransferase pynC (363 aa).

Residues Gly-199 to Gly-200, Asp-225, Ser-254 to Phe-255, Arg-270, and Arg-271 contribute to the S-adenosyl-L-methionine site.

Belongs to the class I-like SAM-binding methyltransferase superfamily. Cation-independent O-methyltransferase family.

Its pathway is secondary metabolite biosynthesis. Functionally, methyltransferase; part of the gene cluster that mediates the biosynthesis of pyranonigrins, a family of antioxidative compounds. The first step of pyranonigrins biosynthesis is performed by the hybrid PKS-NRPS synthetase that condenses 6 malonyl-CoA units to an acetyl starter unit, to form a 1,3,5-trioxotetradecane-6,8-dienyl-ACP. The enoyl reductase (ER) domain of pynA is likely to be functional during the first two rounds of polyketide chain extension, to generate the saturated C-C bonds of the alkyl side chain. PynA subsequently forms the amide bond between the acyl chain and L-serine. Although pynA has a terminal reductase domain, it appears to require the thioesterase pynI for the release of the straight-chain intermediate from pynA via the formation of a tetramic acid pyranonigrin J. The methyltransferase pynC then coverts pyranonigrin J to pyranonigrin I via N-methylation. The FAD-dependent monooxygenase pynG catalyzes an epoxidation-mediated cyclization to form the dihydro-gamma-pyrone moiety, followed by pynD-catalyzed oxidation of the alcohol to the ketone and enolization to yield the characteristic tetramic acid-fused gamma-pyrone core of pyranonigrin H. Pyranonigrin H is substrate of pynH for dehydration-mediated exo-methylene formation from the serine side chain to produce pyranonigrin E, before the oxidase pynE reduces the exo-methylene of pyranonigrin E into a pendant methyl to form pyranonigrin G. The FAD-linked oxidoreductase pynB performs the reverse reaction and converts pyranonigrin G back to pyranonigrin E. This is Methyltransferase pynC from Aspergillus niger (strain ATCC MYA-4892 / CBS 513.88 / FGSC A1513).